A 2126-amino-acid chain; its full sequence is Phthioceranic/hydroxyphthioceranic acid synthase (2126 aa).

The Ketosynthase family 3 (KS3) domain occupies 24 to 447 (VTPVAVIGMA…GTNVHAVVEQ (424 aa)). Cys196 (acyl-thioester intermediate; for beta-ketoacyl synthase activity) is an active-site residue. Residues His331 and His367 each act as for beta-ketoacyl synthase activity in the active site. The tract at residues 449–549 (PQTEAQPHAA…VYQPAVGQDD (101 aa)) is linker domain (LD). Positions 550-849 (RGPVWLFSGQ…VAALAGMRRE (300 aa)) are acyltransferase (AT). Ser641 (acyl-ester intermediate; for acyltransferase activity) is an active-site residue. The interval 909–1191 (STVAVHPLLG…LAVCGLRIGT (283 aa)) is dehydratase (DH). The interval 914–1032 (HPLLGAHVRL…RRASAVLQQV (119 aa)) is N-terminal hotdog fold. A PKS/mFAS DH domain is found at 914–1198 (HPLLGAHVRL…IGTGVSERDK (285 aa)). Catalysis depends on His947, which acts as the Proton acceptor; for dehydratase activity. A C-terminal hotdog fold region spans residues 1051-1198 (PCRVDGEDLR…IGTGVSERDK (148 aa)). The active-site Proton donor; for dehydratase activity is the Asp1115. The segment at 1227–1398 (KWLLISDCAA…SEEDETAWRD (172 aa)) is pseudo beta-ketoacyl reductase (PsiKR). The interval 1426 to 1750 (SGMRLQIRTP…EHTGKLVLHI (325 aa)) is enoylreductase (ER). Residues 1772–2019 (GSYIITGGLG…AERSRFFEVF (248 aa)) are beta-ketoacyl reductase (KR). NADP(+) is bound by residues 1780 to 1783 (LGGL), 1803 to 1806 (SRTQ), 1831 to 1832 (DI), and 1904 to 1905 (FS). The Carrier domain occupies 2040–2126 (DEWPARLRQL…DAPAAALSSQ (87 aa)). Ser2075 is subject to O-(pantetheine 4'-phosphoryl)serine.

Pantetheine 4'-phosphate is required as a cofactor.

It catalyses the reaction hexadecanoyl-[(hydroxy)phthioceranic acid synthase] + 7 (S)-methylmalonyl-CoA + 14 NADPH + 21 H(+) = C37-phthioceranyl-[(hydroxy)phthioceranic acid synthase] + 7 CO2 + 14 NADP(+) + 7 CoA + 7 H2O. The catalysed reaction is hexadecanoyl-[(hydroxy)phthioceranic acid synthase] + 8 (S)-methylmalonyl-CoA + 16 NADPH + 24 H(+) = C40-phthioceranyl-[(hydroxy)phthioceranic acid synthase] + 8 CO2 + 16 NADP(+) + 8 CoA + 8 H2O. It functions in the pathway lipid metabolism; fatty acid biosynthesis. Its pathway is glycolipid metabolism; sulfolipid-1 biosynthesis. Functionally, involved in sulfolipid-1 biosynthesis. Catalyzes the synthesis of the hepta- and octamethyl phthioceranic and hydroxyphthioceranic acids, the methyl-branched acyl constituents of sulfolipids. This Mycobacterium bovis (strain ATCC BAA-935 / AF2122/97) protein is Phthioceranic/hydroxyphthioceranic acid synthase (pks2).